The following is a 386-amino-acid chain: O-methyltransferase 11 (386 aa).

S-adenosyl-L-homocysteine contacts are provided by Ser-207, Gly-231, Asp-254, Asp-274, and Lys-288. Asp-254 contacts S-adenosyl-L-methionine. His-292 functions as the Proton acceptor in the catalytic mechanism.

This sequence belongs to the class I-like SAM-binding methyltransferase superfamily. Cation-independent O-methyltransferase family. As to quaternary structure, homodimer.

It catalyses the reaction dopamine + S-adenosyl-L-methionine = 4-methoxytyramine + S-adenosyl-L-homocysteine + H(+). The enzyme catalyses 3,4-dihydroxy-5-methoxyphenethylamine + S-adenosyl-L-methionine = 3-hydroxy-4,5-dimethoxyphenethylamine + S-adenosyl-L-homocysteine + H(+). The catalysed reaction is 3-hydroxy-4,5-dimethoxyphenethylamine + S-adenosyl-L-methionine = mescaline + S-adenosyl-L-homocysteine + H(+). It carries out the reaction 4-hydroxy-3,5-dimethoxyphenethylamine + S-adenosyl-L-methionine = mescaline + S-adenosyl-L-homocysteine + H(+). It participates in aromatic compound metabolism. The protein operates within alkaloid biosynthesis. O-methyltransferase participating in the biosynthesis of natural products derived from phenylethylamine, including mescaline, a natural hallucinogen potentially used in psychotherapeutic treatments. Catalyzes the O-methylation of mescaline para hydroxyl groups, using dopamine, 3,4-dihydroxy-5-methoxyphenethylamine, 3-hydroxy-4,5-dimethoxyphenethylamine and 4-hydroxy-3,5-dimethoxyphenethylamine as substrates. The sequence is that of O-methyltransferase 11 from Lophophora williamsii (Peyote).